The primary structure comprises 1209 residues: Zinc finger protein 804A (1209 aa).

The C2H2-type zinc finger occupies 57–81; sequence FYCELCDKQYYKHQEFDNHINSYDH. Basic and acidic residues predominate over residues 380-394; that stretch reads VKHNEASTTEVENKN. 2 disordered regions span residues 380–401 and 792–860; these read VKHNEASTTEVENKNGPETLAP and PEEF…MKPQ. Positions 807–819 are enriched in basic residues; that stretch reads KPKKKRRRKRGRF. Basic and acidic residues-rich tracts occupy residues 826 to 836 and 848 to 860; these read LELKENTDYPV and LISEDKKEKMKPQ.

This chain is Zinc finger protein 804A (ZNF804A), found in Homo sapiens (Human).